The primary structure comprises 433 residues: Myricetin 3-O-glucosyl 1,2-rhamnoside 6'-O-caffeoyltransferase AT1 (433 aa).

Catalysis depends on proton acceptor residues H157 and D375.

Belongs to the plant acyltransferase family. In terms of tissue distribution, expressed in young cromes.

The enzyme catalyses myricetin 3-O-[beta-D-glucosyl-(1-&gt;2)-alpha-L-rhamnoside] + (E)-caffeoyl-CoA = myricetin 3-O-[(6-O-(E)-caffeoyl-beta-D-glucosyl)-(1-&gt;2)-alpha-L-rhamnoside] + CoA. Its pathway is flavonoid metabolism. In terms of biological role, caffeoyltransferase involved in montbretin A (MbA) biosynthesis. Catalyzes the caffeoylation of myricetin 3-O-beta-D-glucosyl 1,2-alpha-L-rhamnoside (MRG) to produce myricetin 3-O-(6'-O-caffeoyl)-beta-D-glucosyl 1,2-alpha-L-rhamnoside (mini-MbA), a precursor of MbA. Mini-MbA and MbA are potent inhibitors of human pancreatic alpha-amylase and are being developed as drug candidates to treat type-2 diabetes. In vitro, is able to catalyze the caffeoylation of quercetin 3-O-sophoroside (QGG), although QGG may not be a physiological substrate in vivo. In vitro, can use coumaryl-CoA, feruloyl-CoA and acetyl-CoA, although these three acyl donors may not be physiological in vivo. This Crocosmia x crocosmiiflora (Montbretia) protein is Myricetin 3-O-glucosyl 1,2-rhamnoside 6'-O-caffeoyltransferase AT1.